The sequence spans 318 residues: NADH-ubiquinone oxidoreductase chain 1 (318 aa).

The next 8 helical transmembrane spans lie at 2-22 (FMLN…FLTL), 68-88 (ITMF…MWIP), 100-120 (LGVL…LWSG), 147-167 (AIIL…TLII), 171-191 (YIWL…STLA), 217-237 (GGPF…MNAL), 254-273 (LYTT…FLWI), and 294-314 (LPLT…MAGI).

It belongs to the complex I subunit 1 family.

It localises to the mitochondrion inner membrane. It carries out the reaction a ubiquinone + NADH + 5 H(+)(in) = a ubiquinol + NAD(+) + 4 H(+)(out). Its function is as follows. Core subunit of the mitochondrial membrane respiratory chain NADH dehydrogenase (Complex I) that is believed to belong to the minimal assembly required for catalysis. Complex I functions in the transfer of electrons from NADH to the respiratory chain. The immediate electron acceptor for the enzyme is believed to be ubiquinone. The sequence is that of NADH-ubiquinone oxidoreductase chain 1 (MT-ND1) from Hsunycteris thomasi (Thomas's nectar bat).